The following is a 258-amino-acid chain: Imidazole glycerol phosphate synthase subunit HisF (258 aa).

Active-site residues include aspartate 11 and aspartate 130.

Belongs to the HisA/HisF family. In terms of assembly, heterodimer of HisH and HisF.

Its subcellular location is the cytoplasm. The enzyme catalyses 5-[(5-phospho-1-deoxy-D-ribulos-1-ylimino)methylamino]-1-(5-phospho-beta-D-ribosyl)imidazole-4-carboxamide + L-glutamine = D-erythro-1-(imidazol-4-yl)glycerol 3-phosphate + 5-amino-1-(5-phospho-beta-D-ribosyl)imidazole-4-carboxamide + L-glutamate + H(+). It functions in the pathway amino-acid biosynthesis; L-histidine biosynthesis; L-histidine from 5-phospho-alpha-D-ribose 1-diphosphate: step 5/9. Its function is as follows. IGPS catalyzes the conversion of PRFAR and glutamine to IGP, AICAR and glutamate. The HisF subunit catalyzes the cyclization activity that produces IGP and AICAR from PRFAR using the ammonia provided by the HisH subunit. In Gluconacetobacter diazotrophicus (strain ATCC 49037 / DSM 5601 / CCUG 37298 / CIP 103539 / LMG 7603 / PAl5), this protein is Imidazole glycerol phosphate synthase subunit HisF.